The following is a 388-amino-acid chain: NADPH-dependent butanol dehydrogenase (388 aa).

The protein belongs to the iron-containing alcohol dehydrogenase family.

Functionally, this enzyme has activity using butanol and ethanol as substrates. This chain is NADPH-dependent butanol dehydrogenase (adh1), found in Clostridium saccharobutylicum.